The following is a 60-amino-acid chain: Andropin (60 aa).

The signal sequence occupies residues 1-23 (MKYFVVLVVLALILAIAVGPSDA).

Belongs to the andropin family. In terms of tissue distribution, ejaculatory duct of adult males.

The protein resides in the secreted. Functionally, male-specific peptide with moderate activity against Gram-positive bacteria. The protein is Andropin (Anp) of Drosophila simulans (Fruit fly).